Reading from the N-terminus, the 145-residue chain is D-aminoacyl-tRNA deacylase (145 aa).

The Gly-cisPro motif, important for rejection of L-amino acids motif lies at 137-138 (GP).

Belongs to the DTD family. As to quaternary structure, homodimer.

The protein localises to the cytoplasm. It carries out the reaction glycyl-tRNA(Ala) + H2O = tRNA(Ala) + glycine + H(+). It catalyses the reaction a D-aminoacyl-tRNA + H2O = a tRNA + a D-alpha-amino acid + H(+). In terms of biological role, an aminoacyl-tRNA editing enzyme that deacylates mischarged D-aminoacyl-tRNAs. Also deacylates mischarged glycyl-tRNA(Ala), protecting cells against glycine mischarging by AlaRS. Acts via tRNA-based rather than protein-based catalysis; rejects L-amino acids rather than detecting D-amino acids in the active site. By recycling D-aminoacyl-tRNA to D-amino acids and free tRNA molecules, this enzyme counteracts the toxicity associated with the formation of D-aminoacyl-tRNA entities in vivo and helps enforce protein L-homochirality. This Klebsiella pneumoniae (strain 342) protein is D-aminoacyl-tRNA deacylase.